The following is a 213-amino-acid chain: Thymidine kinase (213 aa).

Residues 20–27 (GPMFSGKT) and 93–96 (DEAQ) each bind ATP. The active-site Proton acceptor is the glutamate 94. Residues cysteine 150, cysteine 153, cysteine 185, and histidine 188 each contribute to the Zn(2+) site.

It belongs to the thymidine kinase family. Homotetramer.

It localises to the cytoplasm. It carries out the reaction thymidine + ATP = dTMP + ADP + H(+). In Mycoplasma genitalium (strain ATCC 33530 / DSM 19775 / NCTC 10195 / G37) (Mycoplasmoides genitalium), this protein is Thymidine kinase.